The primary structure comprises 563 residues: Arginine--tRNA ligase (563 aa).

A 'HIGH' region motif is present at residues 121 to 131 (PNIAKPFSIGH).

This sequence belongs to the class-I aminoacyl-tRNA synthetase family. In terms of assembly, monomer.

It is found in the cytoplasm. The enzyme catalyses tRNA(Arg) + L-arginine + ATP = L-arginyl-tRNA(Arg) + AMP + diphosphate. The chain is Arginine--tRNA ligase from Streptococcus pyogenes serotype M3 (strain ATCC BAA-595 / MGAS315).